The chain runs to 846 residues: Protein kintoun (846 aa).

Disordered stretches follow at residues 1 to 21 (MSTA…ERAD), 377 to 412 (DSGV…PPDP), 581 to 657 (HTSI…DSTI), and 743 to 846 (HDSS…DDEI). Phosphoserine is present on serine 378. The segment covering 399–408 (PETPELETAA) has biased composition (low complexity). Composition is skewed to basic residues over residues 596 to 612 (LHKK…KKQR) and 750 to 766 (QRKK…RAQQ). At serine 770 the chain carries Phosphoserine. Residues 821–832 (TRQDHADADAKN) are compositionally biased toward basic and acidic residues.

This sequence belongs to the PIH1 family. Kintoun subfamily. As to quaternary structure, interacts with Pp1alpha-96A, Pp1-87B, Pp1-13C and flw.

Its subcellular location is the cytoplasm. Required for cytoplasmic pre-assembly of axonemal dyneins, thereby playing a central role in motility in cilia and flagella. Involved in pre-assembly of dynein arm complexes in the cytoplasm before intraflagellar transport loads them for the ciliary compartment. This is Protein kintoun from Drosophila pseudoobscura pseudoobscura (Fruit fly).